The following is a 1478-amino-acid chain: FYVE and coiled-coil domain-containing protein 1 (1478 aa).

Ala-2 carries the post-translational modification N-acetylalanine. Residues 4-33 are a coiled coil; the sequence is TNAESQLQRIIRDLQDAVTELSKEFQEAGE. An RUN domain is found at 36 to 169; sequence TDDSTSLHKF…VQFDLASRGF (134 aa). Position 196 is a phosphoserine (Ser-196). Residues 225–280 are a coiled coil; the sequence is NNEALEGFDEMRLELDQLEVREKQLRERMQQLDRENQELRAAVSQQGEQLQTERER. Position 342 is a phosphoserine (Ser-342). At Thr-381 the chain carries Phosphothreonine. 2 coiled-coil regions span residues 394–555 and 596–1151; these read SDAA…MLER and QEAQ…KDAL. Positions 586 to 613 are disordered; that stretch reads GKPEEEQRGLQEAQLDDTKVQEGSQEEE. Residue Ser-878 is modified to Phosphoserine. The segment at 1173-1231 adopts an FYVE-type zinc-finger fold; sequence DTEANHCLDCKREFSWMVRRHHCRICGRIFCYYCCNNYVLSKHGGKKERCCRACFQKLS. Cys-1179, Cys-1182, Cys-1195, Cys-1198, Cys-1203, Cys-1206, Cys-1223, and Cys-1226 together coordinate Zn(2+). Over residues 1231–1261 the composition is skewed to low complexity; the sequence is SEGPGSPDSSGSGTSQGEPSPALSPASPGPQ. 2 disordered regions span residues 1231–1277 and 1294–1332; these read SEGP…PPDD and SGSS…DMPV. 2 stretches are compositionally biased toward polar residues: residues 1294 to 1305 and 1314 to 1324; these read SGSSLPETPTET and EQDTTSTSLTP. A GOLD domain is found at 1337 to 1466; sequence EICLLKSGEL…SKKVFYHLTV (130 aa).

In terms of assembly, can form homodimers. Interacts (via C-terminus) with MAP1LC3B. Interacts with RAB7A; the interaction with RAB7A induces FYCO1 recruitment to late endosomal/lysosomal compartments. Interacts with MAP1LC3B. As to expression, expressed in heart and skeletal muscle.

The protein localises to the cytoplasmic vesicle. The protein resides in the autophagosome. It localises to the endosome. It is found in the lysosome. May mediate microtubule plus end-directed vesicle transport. The polypeptide is FYVE and coiled-coil domain-containing protein 1 (FYCO1) (Homo sapiens (Human)).